The primary structure comprises 431 residues: Probable sodium/metabolite cotransporter BASS3, chloroplastic (431 aa).

The N-terminal 70 residues, 1 to 70, are a transit peptide targeting the chloroplast; sequence MTLIASLSLP…RRNSGLVPVV (70 aa). 9 helical membrane passes run 110 to 130, 145 to 165, 169 to 189, 198 to 218, 238 to 258, 261 to 281, 288 to 308, 325 to 345, and 387 to 407; these read FWSALLPFVVALTAVAALSYP, LGGIMLSIGIQLSVDDFALAF, VPLSVGFVAQYVLKPLLGVLV, TFYAGFILTCCVAGAQLSSYA, IASVIFTPLLSGLLIGSVVPV, VAMSKSILQVVLVPITLGLVL, VVTLLQPVMPFVAMVCTSLCI, LGLIVPIVTFHAVAFALGYWF, and VPAACSVVVMAIMGLCLASFW.

The protein belongs to the bile acid:sodium symporter (BASS) (TC 2.A.28) family.

Its subcellular location is the membrane. It localises to the plastid. It is found in the chloroplast envelope. Functionally, may function as sodium-coupled metabolite transporter across the chloroplast envelope. In Arabidopsis thaliana (Mouse-ear cress), this protein is Probable sodium/metabolite cotransporter BASS3, chloroplastic (BASS3).